The chain runs to 269 residues: 3-methyl-2-oxobutanoate hydroxymethyltransferase (269 aa).

Positions 43 and 82 each coordinate Mg(2+). Residues 43–44 (DS), Asp82, and Lys110 contribute to the 3-methyl-2-oxobutanoate site. Glu112 is a Mg(2+) binding site. Glu179 (proton acceptor) is an active-site residue.

Belongs to the PanB family. As to quaternary structure, homodecamer; pentamer of dimers. Mg(2+) is required as a cofactor.

It is found in the cytoplasm. It catalyses the reaction 3-methyl-2-oxobutanoate + (6R)-5,10-methylene-5,6,7,8-tetrahydrofolate + H2O = 2-dehydropantoate + (6S)-5,6,7,8-tetrahydrofolate. It functions in the pathway cofactor biosynthesis; (R)-pantothenate biosynthesis; (R)-pantoate from 3-methyl-2-oxobutanoate: step 1/2. In terms of biological role, catalyzes the reversible reaction in which hydroxymethyl group from 5,10-methylenetetrahydrofolate is transferred onto alpha-ketoisovalerate to form ketopantoate. The protein is 3-methyl-2-oxobutanoate hydroxymethyltransferase of Acinetobacter baylyi (strain ATCC 33305 / BD413 / ADP1).